The chain runs to 32 residues: Snaclec (32 aa).

In terms of assembly, dimer; disulfide-linked. In terms of tissue distribution, expressed by the venom gland.

It localises to the secreted. Interferes with one step of hemostasis (modulation of platelet aggregation, or coagulation cascade, for example). The polypeptide is Snaclec (Bothrops diporus (Chaco lancehead)).